Reading from the N-terminus, the 194-residue chain is dCTP deaminase (194 aa).

Residues Arg110–Arg115, Asp128, Val136–Glu138, Tyr171, Lys178, and Gln182 contribute to the dCTP site. Glu138 serves as the catalytic Proton donor/acceptor. Residues Arg169–Asn194 are disordered. Basic and acidic residues predominate over residues Pro170–Asp181. Over residues Gln182–Asn194 the composition is skewed to polar residues.

The protein belongs to the dCTP deaminase family. Homotrimer.

It carries out the reaction dCTP + H2O + H(+) = dUTP + NH4(+). It functions in the pathway pyrimidine metabolism; dUMP biosynthesis; dUMP from dCTP (dUTP route): step 1/2. Catalyzes the deamination of dCTP to dUTP. The polypeptide is dCTP deaminase (Marinomonas sp. (strain MWYL1)).